The following is an 800-amino-acid chain: DNA topoisomerase 4 subunit A (800 aa).

The Topo IIA-type catalytic domain occupies 31–495; sequence LPDVRDGLKP…EIEEIKIDKE (465 aa). Y119 (O-(5'-phospho-DNA)-tyrosine intermediate) is an active-site residue.

The protein belongs to the type II topoisomerase GyrA/ParC subunit family. ParC type 2 subfamily. In terms of assembly, heterotetramer composed of ParC and ParE.

It localises to the cell membrane. The enzyme catalyses ATP-dependent breakage, passage and rejoining of double-stranded DNA.. Functionally, topoisomerase IV is essential for chromosome segregation. It relaxes supercoiled DNA. Performs the decatenation events required during the replication of a circular DNA molecule. The sequence is that of DNA topoisomerase 4 subunit A from Staphylococcus aureus (strain NCTC 8325 / PS 47).